The primary structure comprises 84 residues: Small ribosomal subunit protein uS17 (84 aa).

Belongs to the universal ribosomal protein uS17 family. As to quaternary structure, part of the 30S ribosomal subunit.

One of the primary rRNA binding proteins, it binds specifically to the 5'-end of 16S ribosomal RNA. The protein is Small ribosomal subunit protein uS17 of Yersinia enterocolitica serotype O:8 / biotype 1B (strain NCTC 13174 / 8081).